Reading from the N-terminus, the 629-residue chain is tRNA uridine 5-carboxymethylaminomethyl modification enzyme MnmG (629 aa).

Residue G11–G16 participates in FAD binding. Residue G273–F287 coordinates NAD(+).

Belongs to the MnmG family. As to quaternary structure, homodimer. Heterotetramer of two MnmE and two MnmG subunits. FAD is required as a cofactor.

Its subcellular location is the cytoplasm. NAD-binding protein involved in the addition of a carboxymethylaminomethyl (cmnm) group at the wobble position (U34) of certain tRNAs, forming tRNA-cmnm(5)s(2)U34. This Mycoplasma capricolum subsp. capricolum (strain California kid / ATCC 27343 / NCTC 10154) protein is tRNA uridine 5-carboxymethylaminomethyl modification enzyme MnmG.